The sequence spans 1670 residues: Protein TASOR (1670 aa).

The disordered stretch occupies residues 1–110; it reads MATAVETEAC…QIPRKSREKK (110 aa). Ala-2 carries the N-acetylalanine modification. Residues 67-78 show a composition bias toward polar residues; the sequence is QSLSHEQPQDSS. Ser-344 bears the Phosphoserine mark. Lys-586 participates in a covalent cross-link: Glycyl lysine isopeptide (Lys-Gly) (interchain with G-Cter in SUMO2). Residues Ser-633, Ser-636, Ser-673, and Ser-800 each carry the phosphoserine modification. Glycyl lysine isopeptide (Lys-Gly) (interchain with G-Cter in SUMO2) cross-links involve residues Lys-823 and Lys-832. Ser-843 carries the post-translational modification Phosphoserine. Residue Lys-872 forms a Glycyl lysine isopeptide (Lys-Gly) (interchain with G-Cter in SUMO2) linkage. The tract at residues 921–947 is disordered; the sequence is TGGNARSPEDQLGKHGEKQTPGMKSPE. Phosphoserine occurs at positions 927, 971, and 979. A compositionally biased stretch (basic and acidic residues) spans 927-938; the sequence is SPEDQLGKHGEK. Residues Thr-982 and Thr-1049 each carry the phosphothreonine modification. Ser-1103 is subject to Phosphoserine. Residues 1532-1545 are compositionally biased toward basic and acidic residues; the sequence is ETKGSRGTDQKKNT. Disordered stretches follow at residues 1532–1558 and 1638–1670; these read ETKG…VQNS and FLSA…SQEK. Composition is skewed to polar residues over residues 1546-1558 and 1659-1670; these read QIEL…VQNS and KSDSSRPYSQEK. A Phosphoserine modification is found at Ser-1552.

Belongs to the TASOR family. Component of the HUSH complex; at least composed of TASOR, PPHLN1 and MPHOSPH8. Interacts with MORC2; the interaction associateS MORC2 with the HUSH complex which recruits MORC2 to heterochromatic loci. Interacts with ZNF638; leading to recruitment of the HUSH complex to unintegrated retroviral DNA. Interacts with INPP5A, EML1, SV1L, GPSM2, ITGB3BP, CNTN1, ETFA, PSMD8, S100A10, MPHOSPH8, TMEM100, ALB, PARPBP, HCFC2, NCBP1 and SETDB1.

It is found in the nucleus. The protein localises to the chromosome. In terms of biological role, component of the HUSH complex, a multiprotein complex that mediates epigenetic repression. The HUSH complex is recruited to genomic loci rich in H3K9me3 and is required to maintain transcriptional silencing by promoting recruitment of SETDB1, a histone methyltransferase that mediates further deposition of H3K9me3, as well as MORC2. Also represses L1 retrotransposons in collaboration with MORC2 and, probably, SETDB1, the silencing is dependent of repressive epigenetic modifications, such as H3K9me3 mark. Silencing events often occur within introns of transcriptionally active genes, and lead to the down-regulation of host gene expression. The HUSH complex is also involved in the silencing of unintegrated retroviral DNA by being recruited by ZNF638: some part of the retroviral DNA formed immediately after infection remains unintegrated in the host genome and is transcriptionally repressed. Plays a crucial role in early embryonic development. Involved in the organization of spindle poles and spindle apparatus assembly during zygotic division. Plays an important role in maintaining epiblast fitness or potency. The sequence is that of Protein TASOR from Homo sapiens (Human).